A 162-amino-acid polypeptide reads, in one-letter code: Photosystem II extrinsic protein V (162 aa).

An N-terminal signal peptide occupies residues methionine 1 to alanine 25. Heme c is bound by residues cysteine 62, cysteine 65, histidine 66, and histidine 117.

The protein belongs to the cytochrome c family. PsbV subfamily. PSII is composed of 1 copy each of membrane proteins PsbA, PsbB, PsbC, PsbD, PsbE, PsbF, PsbH, PsbI, PsbJ, PsbK, PsbL, PsbM, PsbT, PsbX, PsbY, PsbZ, Psb30/Ycf12, peripheral proteins PsbO, CyanoQ (PsbQ), PsbU, PsbV and a large number of cofactors. It forms dimeric complexes. Heme c serves as cofactor.

It localises to the cellular thylakoid membrane. One of the extrinsic, lumenal subunits of photosystem II (PSII). PSII is a light-driven water plastoquinone oxidoreductase, using light energy to abstract electrons from H(2)O, generating a proton gradient subsequently used for ATP formation. The extrinsic proteins stabilize the structure of photosystem II oxygen-evolving complex (OEC), the ion environment of oxygen evolution and protect the OEC against heat-induced inactivation. Low-potential cytochrome c that plays a role in the OEC of PSII. In Cyanothece sp. (strain PCC 7425 / ATCC 29141), this protein is Photosystem II extrinsic protein V.